We begin with the raw amino-acid sequence, 357 residues long: Dual-specificity RNA methyltransferase RlmN (357 aa).

The active-site Proton acceptor is the Glu89. One can recognise a Radical SAM core domain in the interval 109 to 340 (EGEKYTVCVS…CTIRESKALD (232 aa)). A disulfide bridge connects residues Cys116 and Cys345. Residues Cys123, Cys127, and Cys130 each coordinate [4Fe-4S] cluster. S-adenosyl-L-methionine is bound by residues 173–174 (GE), Ser203, 226–228 (SLH), and Asn302. The active-site S-methylcysteine intermediate is Cys345.

This sequence belongs to the radical SAM superfamily. RlmN family. The cofactor is [4Fe-4S] cluster.

It is found in the cytoplasm. It carries out the reaction adenosine(2503) in 23S rRNA + 2 reduced [2Fe-2S]-[ferredoxin] + 2 S-adenosyl-L-methionine = 2-methyladenosine(2503) in 23S rRNA + 5'-deoxyadenosine + L-methionine + 2 oxidized [2Fe-2S]-[ferredoxin] + S-adenosyl-L-homocysteine. The catalysed reaction is adenosine(37) in tRNA + 2 reduced [2Fe-2S]-[ferredoxin] + 2 S-adenosyl-L-methionine = 2-methyladenosine(37) in tRNA + 5'-deoxyadenosine + L-methionine + 2 oxidized [2Fe-2S]-[ferredoxin] + S-adenosyl-L-homocysteine. Specifically methylates position 2 of adenine 2503 in 23S rRNA and position 2 of adenine 37 in tRNAs. m2A2503 modification seems to play a crucial role in the proofreading step occurring at the peptidyl transferase center and thus would serve to optimize ribosomal fidelity. This chain is Dual-specificity RNA methyltransferase RlmN, found in Helicobacter pylori (strain HPAG1).